The sequence spans 417 residues: RH-like protein IC (417 aa).

Helical transmembrane passes span 12–32, 44–64, 77–97, 125–145, 172–192, 203–223, 238–258, 265–285, 287–307, 331–351, and 358–378; these read CLPL…YFFT, LVAS…GFGF, VAFN…LDGF, ISAG…MVLV, FYVF…KPLP, TIPS…WPSF, VFNT…VSSL, INMT…GTSC, LITS…ISIG, NFSL…VLHT, and MVGF…AIAV.

It belongs to the ammonium transporter (TC 2.A.49) family. Rh subfamily.

It is found in the membrane. Its function is as follows. May be part of an oligomeric complex which is likely to have a transport or channel function in the erythrocyte membrane. This Gorilla gorilla gorilla (Western lowland gorilla) protein is RH-like protein IC.